Here is a 434-residue protein sequence, read N- to C-terminus: Trigger factor (434 aa).

The region spanning 160-245 is the PPIase FKBP-type domain; the sequence is GDKVKMNFVG…LTEVLAANLP (86 aa).

This sequence belongs to the FKBP-type PPIase family. Tig subfamily.

It is found in the cytoplasm. The enzyme catalyses [protein]-peptidylproline (omega=180) = [protein]-peptidylproline (omega=0). Its function is as follows. Involved in protein export. Acts as a chaperone by maintaining the newly synthesized protein in an open conformation. Functions as a peptidyl-prolyl cis-trans isomerase. This is Trigger factor from Shewanella sp. (strain ANA-3).